We begin with the raw amino-acid sequence, 25 residues long: Xenoposin precursor fragment BM3 (25 aa).

Expressed by the skin glands.

Its subcellular location is the secreted. Functionally, antimicrobial peptide. In Xenopus boumbaensis (Mawa clawed frog), this protein is Xenoposin precursor fragment BM3.